Here is a 717-residue protein sequence, read N- to C-terminus: Polyribonucleotide nucleotidyltransferase (717 aa).

Mg(2+)-binding residues include aspartate 486 and aspartate 492. Positions 553-612 (PKIIQLQIDIDKISLVIGSTGKTVKAITDEFEVRVQIEQDGRITLFGTDSLKMQKAKARI) constitute a KH domain. In terms of domain architecture, S1 motif spans 622–715 (GEIYEGVVKK…KFGKIELELV (94 aa)). The segment at 650-683 (SNRPKSRDDRYGDMRHSRYGSGRHSRYGRDSRNT) is disordered. The segment covering 654 to 665 (KSRDDRYGDMRH) has biased composition (basic and acidic residues). Over residues 666–675 (SRYGSGRHSR) the composition is skewed to basic residues.

Belongs to the polyribonucleotide nucleotidyltransferase family. It depends on Mg(2+) as a cofactor.

The protein resides in the cytoplasm. The enzyme catalyses RNA(n+1) + phosphate = RNA(n) + a ribonucleoside 5'-diphosphate. Involved in mRNA degradation. Catalyzes the phosphorolysis of single-stranded polyribonucleotides processively in the 3'- to 5'-direction. The chain is Polyribonucleotide nucleotidyltransferase from Borrelia turicatae (strain 91E135).